Reading from the N-terminus, the 89-residue chain is MAHKKAGGSSRNGRDSESKRLGVKKFGGEAVLAGNIIVRQRGTKWHPGANVGLGKDHTIFATTNGSVSFRTKANGRTYVSVDPIAEAAE.

The tract at residues 1 to 21 (MAHKKAGGSSRNGRDSESKRL) is disordered.

This sequence belongs to the bacterial ribosomal protein bL27 family.

The sequence is that of Large ribosomal subunit protein bL27 from Brucella anthropi (strain ATCC 49188 / DSM 6882 / CCUG 24695 / JCM 21032 / LMG 3331 / NBRC 15819 / NCTC 12168 / Alc 37) (Ochrobactrum anthropi).